We begin with the raw amino-acid sequence, 454 residues long: Peroxisome assembly protein 10 (454 aa).

Topologically, residues 1–23 are peroxisomal matrix; the sequence is MATQPPPARPPPPLTSSPYPYAA. The chain crosses the membrane as a helical span at residues 24–53; that stretch reads APDIIRAHQKDAYFQGVLANRLSDLHRRLR. Position 54 (Gly54) is a topological domain, cytoplasmic. The helical transmembrane segment at 55-76 threads the bilayer; the sequence is ARSAHAWAAETRTFAAALYLCL. Topologically, residues 77–132 are peroxisomal matrix; it reads TTLLGNRTLGEEYCDLVQVEEAPSKLFASSSSKAADDHIYENGLGGGGDGGPLLPS. Residues 133–165 form a helical membrane-spanning segment; sequence LPRRAGYILTAIVLPHLASRALPSVRSAIRKRL. Over 166–201 the chain is Cytoplasmic; the sequence is QSRLATLSRRRQQTGTKSGSGRGGRGGGGGITEYRV. A disordered region spans residues 171 to 194; it reads TLSRRRQQTGTKSGSGRGGRGGGG. Residues 183–194 show a composition bias toward gly residues; sequence SGSGRGGRGGGG. Residues 202–229 form a helical membrane-spanning segment; the sequence is LRYLLTHLTPLTSGAHFRAATLAVFYFT. Over 230–276 the chain is Peroxisomal matrix; that stretch reads GAYYELSKWVWGLRYVFTTRAGRVVDDDHNRHHHSPQHGGGNGGRAG. Residues 277 to 296 form a helical membrane-spanning segment; the sequence is YEVLGVLLVVQMAVRAWLHV. Over 297 to 454 the chain is Cytoplasmic; that stretch reads REQLSSGSVA…VQHILPLRAA (158 aa). The interval 302–329 is disordered; sequence SGSVAGGGGEEEEDGEDGFRERTAFGPG. Cys402, Cys405, Cys417, His419, Cys422, Cys425, Cys436, and Cys439 together coordinate Zn(2+). The segment at 402-440 adopts an RING-type zinc-finger fold; sequence CTLCLEELKDPAATQCGHVFCWACIGDWVREKPECPLCR.

It belongs to the pex2/pex10/pex12 family. In terms of assembly, component of the PEX2-PEX10-PEX12 retrotranslocation channel, composed of PEX2, PEX10 and PEX12.

It localises to the peroxisome membrane. It carries out the reaction S-ubiquitinyl-[E2 ubiquitin-conjugating enzyme]-L-cysteine + [acceptor protein]-L-lysine = [E2 ubiquitin-conjugating enzyme]-L-cysteine + N(6)-ubiquitinyl-[acceptor protein]-L-lysine.. Its pathway is protein modification; protein ubiquitination. With respect to regulation, the E3 ubiquitin-protein ligase activity is stimulated by PEX12. In terms of biological role, E3 ubiquitin-protein ligase component of a retrotranslocation channel required for peroxisome organization by mediating export of the PEX5 receptor from peroxisomes to the cytosol, thereby promoting PEX5 recycling. The retrotranslocation channel is composed of PEX2, PEX10 and PEX12; each subunit contributing transmembrane segments that coassemble into an open channel that specifically allows the passage of PEX5 through the peroxisomal membrane. PEX10 also regulates PEX5 recycling by acting as a E3 ubiquitin-protein ligase. When PEX5 recycling is compromised, PEX10 catalyzes polyubiquitination of PEX5 during its passage through the retrotranslocation channel, leading to its degradation. This Thermothelomyces thermophilus (strain ATCC 42464 / BCRC 31852 / DSM 1799) (Sporotrichum thermophile) protein is Peroxisome assembly protein 10.